A 338-amino-acid chain; its full sequence is mRNA decay activator protein ZFP36L1 (338 aa).

The interval 1–111 is necessary and sufficient for the association with mRNA decay enzymes and mRNA decay activation; the sequence is MTTTLVSATI…QKQPGSGQVN (111 aa). A Phosphoserine; by MAPKAPK2 modification is found at S54. Phosphoserine; by PKB/AKT1 is present on S90. Phosphoserine; by PKB/AKT1 and MAPKAPK2 is present on S92. The tract at residues 93–113 is disordered; the sequence is EGGERLLPTQKQPGSGQVNSS. Over residues 101–113 the composition is skewed to polar residues; it reads TQKQPGSGQVNSS. 2 consecutive C3H1-type zinc fingers follow at residues 114–142 and 152–180; these read RYKT…HGIH and KYKT…HNAE. A necessary for mRNA decay activation region spans residues 185 to 338; that stretch reads LAGGRDLSAD…IFSRLSISDD (154 aa). A Phosphoserine; by PKB/AKT1 and MAPKAPK2 modification is found at S203. Residues 273–338 are disordered; it reads SPTTFLFRPM…IFSRLSISDD (66 aa). Positions 305-318 are enriched in low complexity; sequence YLSSSSSSHSGSDS. A Phosphoserine modification is found at S318. S334 carries the phosphoserine; by RPS6KA1 modification.

In terms of assembly, associates with the cytoplasmic CCR4-NOT deadenylase and RNA exosome complexes to trigger ARE-containing mRNA deadenylation and decay processes. Interacts with CNOT1. Interacts (via N-terminus) with CNOT6. Interacts with CNOT7; this interaction is inhibited in response to phorbol 12-myristate 13-acetate (PMA) treatment in a p38 MAPK-dependent manner. Interacts with DCP1A. Interacts (via N-terminus) with DCP2. Interacts (via N-terminus) with EXOSC2. Interacts with XRN1. Interacts (via phosphorylated form) with YWHAB; this interaction occurs in a protein kinase AKT1-dependent manner. Interacts (via phosphorylated form) with YWHAZ; this interaction occurs in a p38 MAPK- and AKT-signaling pathways. Phosphorylated. Phosphorylated by RPS6KA1 at Ser-334 upon phorbol 12-myristate 13-acetate (PMA) treatment; this phosphorylation results in dissociation of the CCR4-NOT deadenylase complex and induces p38 MAPK-mediated stabilization of the low-density lipoprotein receptor LDLR mRNA. Phosphorylated by protein kinase AKT1 at Ser-92 and Ser-203 in response to insulin; these phosphorylations stabilize ZFP36L1, increase the association with 14-3-3 proteins and mediate ARE-containing mRNA stabilization. AKT1-mediated phosphorylation at Ser-92 does not impair ARE-containing RNA-binding. Phosphorylated at Ser-54, Ser-92 and Ser-203 by MAPKAPK2; these phosphorylations increase the association with 14-3-3 proteins and mediate ARE-containing mRNA stabilization in a protein kinase AKT1-independent manner. MAPKAPK2-mediated phosphorylations at Ser-54, Ser-92 and Ser-203 do not impair ARE-containing RNA-binding. Phosphorylations increase the association with 14-3-3 proteins and mediate ARE-containing mRNA stabilization during early adipogenesis in a p38 MAPK- and AKT-dependent manner. Phosphorylated by protein kinase AKT1 at Ser-92. In terms of processing, ubiquitinated. Ubiquitination leads to proteasomal degradation, a process inhibited by phosphorylations at Ser-90, Ser-92 and Ser-203.

Its subcellular location is the nucleus. It localises to the cytoplasm. The protein resides in the cytoplasmic granule. The protein localises to the P-body. In terms of biological role, zinc-finger RNA-binding protein that destabilizes several cytoplasmic AU-rich element (ARE)-containing mRNA transcripts by promoting their poly(A) tail removal or deadenylation, and hence provide a mechanism for attenuating protein synthesis. Acts as a 3'-untranslated region (UTR) ARE mRNA-binding adapter protein to communicate signaling events to the mRNA decay machinery. Functions by recruiting the CCR4-NOT deadenylase complex and components of the cytoplasmic RNA decay machinery to the bound ARE-containing mRNAs, and hence promotes ARE-mediated mRNA deadenylation and decay processes. Also induces the degradation of ARE-containing mRNAs even in absence of poly(A) tail. Binds to 3'-UTR ARE of numerous mRNAs. Positively regulates early adipogenesis by promoting ARE-mediated mRNA decay of immediate early genes (IEGs). Promotes ARE-mediated mRNA decay of mineralocorticoid receptor NR3C2 mRNA in response to hypertonic stress. Negatively regulates hematopoietic/erythroid cell differentiation by promoting ARE-mediated mRNA decay of the transcription factor STAT5B mRNA. Positively regulates monocyte/macrophage cell differentiation by promoting ARE-mediated mRNA decay of the cyclin-dependent kinase CDK6 mRNA. Promotes degradation of ARE-containing pluripotency-associated mRNAs in embryonic stem cells (ESCs), such as NANOG, through a fibroblast growth factor (FGF)-induced MAPK-dependent signaling pathway, and hence attenuates ESC self-renewal and positively regulates mesendoderm differentiation. May play a role in mediating pro-apoptotic effects in malignant B-cells by promoting ARE-mediated mRNA decay of BCL2 mRNA. In association with ZFP36L2 maintains quiescence on developing B lymphocytes by promoting ARE-mediated decay of several mRNAs encoding cell cycle regulators that help B cells progress through the cell cycle, and hence ensuring accurate variable-diversity-joining (VDJ) recombination and functional immune cell formation. Together with ZFP36L2 is also necessary for thymocyte development and prevention of T-cell acute lymphoblastic leukemia (T-ALL) transformation by promoting ARE-mediated mRNA decay of the oncogenic transcription factor NOTCH1 mRNA. Participates in the delivery of target ARE-mRNAs to processing bodies (PBs). In addition to its cytosolic mRNA-decay function, plays a role in the regulation of nuclear mRNA 3'-end processing; modulates mRNA 3'-end maturation efficiency of the DLL4 mRNA through binding with an ARE embedded in a weak noncanonical polyadenylation (poly(A)) signal in endothelial cells. Also involved in the regulation of stress granule (SG) and P-body (PB) formation and fusion. Plays a role in vasculogenesis and endocardial development. Plays a role in the regulation of keratinocyte proliferation, differentiation and apoptosis. Plays a role in myoblast cell differentiation. The protein is mRNA decay activator protein ZFP36L1 of Rattus norvegicus (Rat).